A 122-amino-acid polypeptide reads, in one-letter code: Large ribosomal subunit protein uL18 (122 aa).

The protein belongs to the universal ribosomal protein uL18 family. As to quaternary structure, part of the 50S ribosomal subunit; part of the 5S rRNA/L5/L18/L25 subcomplex. Contacts the 5S and 23S rRNAs.

Its function is as follows. This is one of the proteins that bind and probably mediate the attachment of the 5S RNA into the large ribosomal subunit, where it forms part of the central protuberance. The protein is Large ribosomal subunit protein uL18 of Desulfitobacterium hafniense (strain Y51).